The chain runs to 198 residues: Recombination protein RecR (198 aa).

A C4-type zinc finger spans residues 57–72 (CSLCGNLDTVDPCHIC). The 96-residue stretch at 80–175 (GLICVVETVG…TVTRVGHGVP (96 aa)) folds into the Toprim domain.

This sequence belongs to the RecR family.

In terms of biological role, may play a role in DNA repair. It seems to be involved in an RecBC-independent recombinational process of DNA repair. It may act with RecF and RecO. This is Recombination protein RecR from Gluconobacter oxydans (strain 621H) (Gluconobacter suboxydans).